Here is a 343-residue protein sequence, read N- to C-terminus: Flap endonuclease 1 (343 aa).

The N-domain stretch occupies residues 1–98 (MGVPIGELIP…KELEKRREAR (98 aa)). Residues aspartate 27, aspartate 80, glutamate 152, glutamate 154, aspartate 173, aspartate 175, and aspartate 236 each contribute to the Mg(2+) site. Residues 116-258 (EARKYAQRAT…KALEIVKYSK (143 aa)) form an I-domain region. Positions 330 to 338 (KQSTLESWF) are interaction with PCNA.

It belongs to the XPG/RAD2 endonuclease family. FEN1 subfamily. As to quaternary structure, interacts with PCNA. PCNA stimulates the nuclease activity without altering cleavage specificity. Requires Mg(2+) as cofactor.

Structure-specific nuclease with 5'-flap endonuclease and 5'-3' exonuclease activities involved in DNA replication and repair. During DNA replication, cleaves the 5'-overhanging flap structure that is generated by displacement synthesis when DNA polymerase encounters the 5'-end of a downstream Okazaki fragment. Binds the unpaired 3'-DNA end and kinks the DNA to facilitate 5' cleavage specificity. Cleaves one nucleotide into the double-stranded DNA from the junction in flap DNA, leaving a nick for ligation. Also involved in the base excision repair (BER) pathway. Acts as a genome stabilization factor that prevents flaps from equilibrating into structures that lead to duplications and deletions. Also possesses 5'-3' exonuclease activity on nicked or gapped double-stranded DNA. This Pyrococcus abyssi (strain GE5 / Orsay) protein is Flap endonuclease 1.